A 63-amino-acid chain; its full sequence is Frenatin 1.1 (63 aa).

Residues 1–22 (MAFLKKSLFLVLFLGLVSLSIC) form the signal peptide. Positions 23 to 49 (EKEKKEQEDEDENEEEKESEEGSEEKR) are excised as a propeptide. The segment at 25 to 63 (EKKEQEDEDENEEEKESEEGSEEKRGLLDTLGGILGLGR) is disordered. The span at 30–45 (EDEDENEEEKESEEGS) shows a compositional bias: acidic residues. At Leu61 the chain carries Leucine amide.

Expressed by the skin glands.

Its subcellular location is the secreted. Its function is as follows. Antimicrobial peptide with selective activity. Is only active against Micrococcus luteus (MIC=25 ug/ml) and not against Bacillus cereus, Escherichia coli, Leuconostoc mesenteroides, Micrococcus luteus, Pastewella haemolytica, Staphylococcus aureus, Streptococcus faecalis and Streptococcus uberis. The polypeptide is Frenatin 1.1 (Nyctimystes infrafrenatus (White-lipped tree frog)).